Here is a 160-residue protein sequence, read N- to C-terminus: MGRFILVNLGLLVVAFSLRGSEACCPCGWSSYDKYCYKVFDKRKNWDDAERFCMEQGKGGHLAALGSLEEGKFVGKLAFKKLKEHPTYVWIGLRAQGQGQQCSSRWSDGSRILYENWHPLQSKKCIALSKWTEYLKWYNHICDFTLPFICKFLAEPDDPE.

The first 23 residues, 1–23 (MGRFILVNLGLLVVAFSLRGSEA), serve as a signal peptide directing secretion. Cystine bridges form between cysteine 25-cysteine 36, cysteine 53-cysteine 150, and cysteine 125-cysteine 142. One can recognise a C-type lectin domain in the interval 32–151 (YDKYCYKVFD…CDFTLPFICK (120 aa)).

This sequence belongs to the snaclec family. Heterodimer of subunits A and B; disulfide-linked. In terms of tissue distribution, expressed by the venom gland.

The protein localises to the secreted. Interferes with one step of hemostasis (modulation of platelet aggregation, or coagulation cascade, for example). This is Snaclec subunit A from Philodryas olfersii (Green snake).